A 298-amino-acid chain; its full sequence is Ribosomal protein L11 methyltransferase (298 aa).

S-adenosyl-L-methionine-binding residues include Thr152, Gly173, Asp195, and Asn234.

It belongs to the methyltransferase superfamily. PrmA family.

Its subcellular location is the cytoplasm. It carries out the reaction L-lysyl-[protein] + 3 S-adenosyl-L-methionine = N(6),N(6),N(6)-trimethyl-L-lysyl-[protein] + 3 S-adenosyl-L-homocysteine + 3 H(+). In terms of biological role, methylates ribosomal protein L11. The polypeptide is Ribosomal protein L11 methyltransferase (Ralstonia nicotianae (strain ATCC BAA-1114 / GMI1000) (Ralstonia solanacearum)).